Here is a 538-residue protein sequence, read N- to C-terminus: Syncytin-1 (538 aa).

The first 20 residues, 1 to 20 (MALPYHIFLFTVLLPSFTLT), serve as a signal peptide directing secretion. Residues 31-443 (SSPYQEFLWR…NIGPWGLLSQ (413 aa)) are Extracellular-facing. A glycan (N-linked (GlcNAc...) asparagine) is linked at Asn-169. The short motif at 186–189 (CWMC) is the CXXC element. 3 disulfides stabilise this stretch: Cys-186/Cys-189, Cys-186/Cys-405, and Cys-397/Cys-404. N-linked (GlcNAc...) asparagine glycans are attached at residues Asn-208, Asn-214, Asn-234, Asn-242, and Asn-281. The interval 320–340 (ILPFVMGAGVLGALGTGIGSI) is fusion peptide. An immunosuppression region spans residues 380–396 (LQNRRALDLLTAERGGT). The CX6CC motif lies at 397–405 (CLFLGEECC). N-linked (GlcNAc...) asparagine glycosylation occurs at Asn-409. Residues 444-464 (WMPWILPFLGPLAAIILLLLF) traverse the membrane as a helical segment. The segment at 465–484 (GPCIFNLLVNFVSSRIEAIK) is essential for the fusiogenic function. The Cytoplasmic segment spans residues 465 to 538 (GPCIFNLLVN…LLRPNSAGSS (74 aa)). The disordered stretch occupies residues 494–538 (KTKNYRRSLDWPASPRSDVNDIKGIPPEEISTAQPLLRPNSAGSS).

This sequence belongs to the gamma type-C retroviral envelope protein family. HERV class-I W env subfamily. In terms of assembly, the mature envelope protein (Env) consists of a trimer of SU-TM heterodimers attached probably by a labile interchain disulfide bond. Interacts with the C-type lectin CD209/DC-SIGN. In terms of processing, specific enzymatic cleavages in vivo yield mature proteins. Envelope glycoproteins are synthesized as an inactive precursor that is heavily N-glycosylated and processed likely by furin in the Golgi to yield the mature SU and TM proteins. The cleavage site between SU and TM requires the minimal sequence [KR]-X-[KR]-R. The CXXC motif is highly conserved across a broad range of retroviral envelope proteins. It is thought to participate in the formation of a labile disulfide bond possibly with the CX6CC motif present in the transmembrane protein.

The protein localises to the cell membrane. It is found in the virion. Functionally, this endogenous retroviral envelope protein has retained its original fusogenic properties and participates in trophoblast fusion and the formation of a syncytium during placenta morphogenesis. May recognize and induce fusion through binding of SLC1A4 and SLC1A5. In terms of biological role, endogenous envelope proteins may have kept, lost or modified their original function during evolution. Retroviral envelope proteins mediate receptor recognition and membrane fusion during early infection. The surface protein (SU) mediates receptor recognition, while the transmembrane protein (TM) acts as a class I viral fusion protein. The protein may have at least 3 conformational states: pre-fusion native state, pre-hairpin intermediate state, and post-fusion hairpin state. During viral and target cell membrane fusion, the coiled coil regions (heptad repeats) assume a trimer-of-hairpins structure, positioning the fusion peptide in close proximity to the C-terminal region of the ectodomain. The formation of this structure appears to drive apposition and subsequent fusion of membranes. The protein is Syncytin-1 (ERVW-1) of Hylobates pileatus (Pileated gibbon).